The chain runs to 455 residues: Folate transporter 2 (455 aa).

Helical transmembrane passes span 42–64 (IVVYLVGLSDGLTHLASLAIYYL), 84–103 (YIPFILKPVIALITDSFSIF), 110–131 (YLFLFSLFQSLNFLALAFLNLS), 137–157 (LILFFISLCASFCTTVAEALV), 177–195 (IASKAIGSLSVAYFSGYFL), 201–221 (EYIFIATSIFPLIISLSCLFL), 242–261 (FINTPIFLGPFLYIFVYMSG), and 281–301 (SFMGTLRLTYGIASLIGIIIY). N-linked (GlcNAc...) asparagine glycosylation is present at Asn-307. 2 helical membrane passes run 313–331 (TLIITTLVSFPIYISPIIL) and 347–367 (VLSGGFLIEAITEIQLLPLFI). N-linked (GlcNAc...) asparagine glycosylation is present at Asn-416. Residues 417 to 438 (LSLYILTCGFFLLFSLTLVPLL) traverse the membrane as a helical segment.

This sequence belongs to the major facilitator superfamily. Folate-biopterin transporter (TC 2.A.71) family.

It is found in the cell membrane. The catalysed reaction is folate(in) + H(+)(in) = folate(out) + H(+)(out). It catalyses the reaction (6S)-5-methyl-5,6,7,8-tetrahydrofolate(in) + H(+)(in) = (6S)-5-methyl-5,6,7,8-tetrahydrofolate(out) + H(+)(out). With respect to regulation, transport of folates is inhibited by probenecid and methotrexate. Functionally, folate transporter with broad substrate specificity. Transports folic acid, folinic acid, pteroic acid, dihydropteroic acid, the folate precursor p-amino benzoic acid (pABA) and the human folate catabolite pABA monoglutamate. Can transport 5-methyltetrahydrofolate with low efficiency. This chain is Folate transporter 2, found in Plasmodium falciparum (isolate 3D7).